The chain runs to 130 residues: Ribonuclease P protein component 2 (130 aa).

It belongs to the eukaryotic/archaeal RNase P protein component 2 family. In terms of assembly, consists of a catalytic RNA component and at least 4-5 protein subunits.

The protein localises to the cytoplasm. The catalysed reaction is Endonucleolytic cleavage of RNA, removing 5'-extranucleotides from tRNA precursor.. Functionally, part of ribonuclease P, a protein complex that generates mature tRNA molecules by cleaving their 5'-ends. The chain is Ribonuclease P protein component 2 from Methanococcus maripaludis (strain C7 / ATCC BAA-1331).